We begin with the raw amino-acid sequence, 137 residues long: uncharacterized protein (137 aa).

A helical transmembrane segment spans residues 20–42; the sequence is TVLAFKGEGALALAGLLVMAAVA.

It localises to the host membrane. This is an uncharacterized protein from Dryophytes versicolor (chameleon treefrog).